The sequence spans 219 residues: Proteasome subunit beta (219 aa).

Residues 1–14 (MISNSEYHKEYMKG) constitute a propeptide, removed in mature form; by autocatalysis. Residue threonine 15 is the Nucleophile of the active site.

It belongs to the peptidase T1B family. In terms of assembly, the 20S proteasome core is composed of 14 alpha and 14 beta subunits that assemble into four stacked heptameric rings, resulting in a barrel-shaped structure. The two inner rings, each composed of seven catalytic beta subunits, are sandwiched by two outer rings, each composed of seven alpha subunits. The catalytic chamber with the active sites is on the inside of the barrel. Has a gated structure, the ends of the cylinder being occluded by the N-termini of the alpha-subunits. Is capped at one or both ends by the proteasome regulatory ATPase, PAN.

The protein resides in the cytoplasm. It carries out the reaction Cleavage of peptide bonds with very broad specificity.. With respect to regulation, the formation of the proteasomal ATPase PAN-20S proteasome complex, via the docking of the C-termini of PAN into the intersubunit pockets in the alpha-rings, triggers opening of the gate for substrate entry. Interconversion between the open-gate and close-gate conformations leads to a dynamic regulation of the 20S proteasome proteolysis activity. Its function is as follows. Component of the proteasome core, a large protease complex with broad specificity involved in protein degradation. This chain is Proteasome subunit beta, found in Methanococcus maripaludis (strain C6 / ATCC BAA-1332).